We begin with the raw amino-acid sequence, 449 residues long: Adenylosuccinate synthetase isozyme 1 B (449 aa).

GTP-binding positions include 34–40 (GDEGKGK) and 62–64 (GHT). The active-site Proton acceptor is the aspartate 35. Mg(2+) is bound by residues aspartate 35 and glycine 62. Substrate is bound at residue aspartate 35. IMP contacts are provided by residues 35–38 (DEGK), 60–63 (NAGH), threonine 155, arginine 169, asparagine 248, threonine 263, and arginine 327. The active-site Proton donor is histidine 63. 323-329 (VTTGRKR) serves as a coordination point for substrate. Residues arginine 329, 355-357 (KLD), and 437-440 (GVGK) contribute to the GTP site.

Belongs to the adenylosuccinate synthetase family. In terms of assembly, homodimer. The cofactor is Mg(2+).

The protein resides in the cytoplasm. The catalysed reaction is IMP + L-aspartate + GTP = N(6)-(1,2-dicarboxyethyl)-AMP + GDP + phosphate + 2 H(+). It functions in the pathway purine metabolism; AMP biosynthesis via de novo pathway; AMP from IMP: step 1/2. Its function is as follows. Component of the purine nucleotide cycle (PNC), which interconverts IMP and AMP to regulate the nucleotide levels in various tissues, and which contributes to glycolysis and ammoniagenesis. Catalyzes the first committed step in the biosynthesis of AMP from IMP. The polypeptide is Adenylosuccinate synthetase isozyme 1 B (adss1b) (Salmo salar (Atlantic salmon)).